A 361-amino-acid chain; its full sequence is Queuine tRNA-ribosyltransferase (361 aa).

The active-site Proton acceptor is Asp-92. Substrate is bound by residues 92-96 (DSGGF), Asp-146, Gln-189, and Gly-216. The interval 247–253 (GVGKPVD) is RNA binding. Asp-266 (nucleophile) is an active-site residue. The RNA binding; important for wobble base 34 recognition stretch occupies residues 271-275 (TRSGR). Zn(2+) contacts are provided by Cys-304, Cys-306, Cys-309, and His-335.

Belongs to the queuine tRNA-ribosyltransferase family. As to quaternary structure, homodimer. Within each dimer, one monomer is responsible for RNA recognition and catalysis, while the other monomer binds to the replacement base PreQ1. It depends on Zn(2+) as a cofactor.

The catalysed reaction is 7-aminomethyl-7-carbaguanine + guanosine(34) in tRNA = 7-aminomethyl-7-carbaguanosine(34) in tRNA + guanine. Its pathway is tRNA modification; tRNA-queuosine biosynthesis. Functionally, catalyzes the base-exchange of a guanine (G) residue with the queuine precursor 7-aminomethyl-7-deazaguanine (PreQ1) at position 34 (anticodon wobble position) in tRNAs with GU(N) anticodons (tRNA-Asp, -Asn, -His and -Tyr). Catalysis occurs through a double-displacement mechanism. The nucleophile active site attacks the C1' of nucleotide 34 to detach the guanine base from the RNA, forming a covalent enzyme-RNA intermediate. The proton acceptor active site deprotonates the incoming PreQ1, allowing a nucleophilic attack on the C1' of the ribose to form the product. After dissociation, two additional enzymatic reactions on the tRNA convert PreQ1 to queuine (Q), resulting in the hypermodified nucleoside queuosine (7-(((4,5-cis-dihydroxy-2-cyclopenten-1-yl)amino)methyl)-7-deazaguanosine). The sequence is that of Queuine tRNA-ribosyltransferase from Rickettsia africae (strain ESF-5).